The following is a 449-amino-acid chain: Delta(8)-fatty-acid desaturase 1 (449 aa).

The Cytochrome b5 heme-binding domain maps to 7 to 91 (KKYITNEDLK…IRDFQVSEVS (85 aa)). His42 and His65 together coordinate heme. 2 consecutive transmembrane segments (helical) span residues 113–133 (VTLY…YGVL) and 138–158 (VFAH…SAYI). The Histidine box-1 motif lies at 160–164 (HDSGH). The helical transmembrane segment at 173–195 (YNRFAQLLSGNCLTGISIAWWKW) threads the bilayer. The Histidine box-2 signature appears at 197-201 (HNAHH). 3 consecutive transmembrane segments (helical) span residues 255-275 (YYPV…LLLF), 284-304 (ALNF…VSCL), and 311-331 (FFFV…FTLN). The Histidine box-3 motif lies at 374–378 (QLEHH).

This sequence belongs to the fatty acid desaturase type 1 family. Requires Fe cation as cofactor. Highly expressed in flowers. Expressed in roots, leaves, stems and siliques.

Its subcellular location is the endoplasmic reticulum membrane. It catalyses the reaction an N-acyl-(4R)-4-hydroxysphinganine + 2 Fe(II)-[cytochrome b5] + O2 + 2 H(+) = a (4R,8E)-4-hydroxysphingenine ceramide + 2 Fe(III)-[cytochrome b5] + 2 H2O. It carries out the reaction an N-acyl-(4R)-4-hydroxysphinganine + 2 Fe(II)-[cytochrome b5] + O2 + 2 H(+) = a (4R,8Z)-4-hydroxysphing-8-enine ceramide + 2 Fe(III)-[cytochrome b5] + 2 H2O. Functionally, plays a major role as delta(8)-fatty-acid desaturase which introduces a double bond at the 8-position in the long-chain base (LCB) of ceramides with or without a hydroxy group at the 4-position. The enzyme produces both the 8E and 8Z isomers (in a 4:1 ratio). This structural modification contributes to the quantitative partitioning of ceramides between the two major sphingolipid classes, glucosylceramides and glycosylinositolphosphoryl ceramides. Sphingolipids are important membrane components involved in environmental stress responses, such as resistance to chilling, and act as cell signaling molecules. The protein is Delta(8)-fatty-acid desaturase 1 (SLD1) of Arabidopsis thaliana (Mouse-ear cress).